The following is an 89-amino-acid chain: Small ribosomal subunit protein uS15 (89 aa).

The protein belongs to the universal ribosomal protein uS15 family. In terms of assembly, part of the 30S ribosomal subunit. Forms a bridge to the 50S subunit in the 70S ribosome, contacting the 23S rRNA.

One of the primary rRNA binding proteins, it binds directly to 16S rRNA where it helps nucleate assembly of the platform of the 30S subunit by binding and bridging several RNA helices of the 16S rRNA. Its function is as follows. Forms an intersubunit bridge (bridge B4) with the 23S rRNA of the 50S subunit in the ribosome. This chain is Small ribosomal subunit protein uS15, found in Pelotomaculum thermopropionicum (strain DSM 13744 / JCM 10971 / SI).